The sequence spans 159 residues: Large ribosomal subunit protein uL10 (159 aa).

This sequence belongs to the universal ribosomal protein uL10 family. In terms of assembly, part of the ribosomal stalk of the 50S ribosomal subunit. The N-terminus interacts with L11 and the large rRNA to form the base of the stalk. The C-terminus forms an elongated spine to which L12 dimers bind in a sequential fashion forming a multimeric L10(L12)X complex.

Functionally, forms part of the ribosomal stalk, playing a central role in the interaction of the ribosome with GTP-bound translation factors. In Campylobacter lari (strain RM2100 / D67 / ATCC BAA-1060), this protein is Large ribosomal subunit protein uL10.